Consider the following 98-residue polypeptide: Aspartyl/glutamyl-tRNA(Asn/Gln) amidotransferase subunit C (98 aa).

The protein belongs to the GatC family. As to quaternary structure, heterotrimer of A, B and C subunits.

It catalyses the reaction L-glutamyl-tRNA(Gln) + L-glutamine + ATP + H2O = L-glutaminyl-tRNA(Gln) + L-glutamate + ADP + phosphate + H(+). The catalysed reaction is L-aspartyl-tRNA(Asn) + L-glutamine + ATP + H2O = L-asparaginyl-tRNA(Asn) + L-glutamate + ADP + phosphate + 2 H(+). In terms of biological role, allows the formation of correctly charged Asn-tRNA(Asn) or Gln-tRNA(Gln) through the transamidation of misacylated Asp-tRNA(Asn) or Glu-tRNA(Gln) in organisms which lack either or both of asparaginyl-tRNA or glutaminyl-tRNA synthetases. The reaction takes place in the presence of glutamine and ATP through an activated phospho-Asp-tRNA(Asn) or phospho-Glu-tRNA(Gln). In Kocuria rhizophila (strain ATCC 9341 / DSM 348 / NBRC 103217 / DC2201), this protein is Aspartyl/glutamyl-tRNA(Asn/Gln) amidotransferase subunit C.